We begin with the raw amino-acid sequence, 410 residues long: MITHNFNTLDLLTSPVWIVSPFEEQLIYANSAAKLLMQDLTFSQLRTGPYSVSSQKELPKYLSDLQNQHDIIEILTVQRKEEETALSCRLVLRKLTETEPVIIFEGIEAPATLGLKASRSANYQRKKQGFYARFFLTNSAPMLLIDPSRDGQIVDANLAALNFYGYNHETMCQKHTWEINMLGRRVMPIMHEISHLPGGHKPLNFVHKLADGSTRHVQTYAGPIEIYGDKLMLCIVHDITEQKRLEEQLEHAAHHDAMTGLLNRRQFYHITEPGQMQHLAIAQDYSLLLIDTDRFKHINDLYGHSKGDEVLCALARTLESCARKGDLVFRWGGEEFVLLLPRTPLDTALSLAETIRVSVAKVSISGLPRFTVSIGVAHHEGNESIDELFKRVDDALYRAKNDGRNRVLAA.

2 PAS domains span residues 3–70 (THNF…NQHD) and 129–198 (GFYA…HLPG). The region spanning 199-251 (GHKPLNFVHKLADGSTRHVQTYAGPIEIYGDKLMLCIVHDITEQKRLEEQLEH) is the PAC domain. Positions 283–410 (QDYSLLLIDT…NDGRNRVLAA (128 aa)) constitute a GGDEF domain. Position 291 (D291) interacts with Mg(2+). 3 residues coordinate substrate: N299, H304, and D308. E334 is a Mg(2+) binding site. E334 (proton acceptor) is an active-site residue.

As to quaternary structure, forms homodimers and homotetramers. Interacts with PdeR and MlrA. It depends on Mg(2+) as a cofactor.

The catalysed reaction is 2 GTP = 3',3'-c-di-GMP + 2 diphosphate. Its pathway is purine metabolism; 3',5'-cyclic di-GMP biosynthesis. With respect to regulation, activity is inhibited by the phosphodiesterase PdeR. Inhibition is relieved by high cellular c-di-GMP levels. Part of a signaling cascade that regulates curli biosynthesis. The cascade is composed of two cyclic-di-GMP (c-di-GMP) control modules, in which c-di-GMP controlled by the DgcE/PdeH pair (module I) regulates the activity of the DgcM/PdeR pair (module II), which in turn regulates activity of the transcription factor MlrA and expression of the master biofilm regulator csgD. DgcM stimulates activity of MlrA by direct interaction, leading to the transcription of csgD. It also catalyzes the synthesis of c-di-GMP via the condensation of 2 GTP molecules, which contributes to the c-di-GMP pool generated by module I in a positive feedback loop. Production of c-di-GMP contributes to but is not essential for MlrA activation. In Escherichia coli (strain K12), this protein is Diguanylate cyclase DgcM.